The sequence spans 234 residues: Demethylmenaquinone methyltransferase (234 aa).

Residues threonine 58, aspartate 79, and 106-107 (NA) contribute to the S-adenosyl-L-methionine site.

Belongs to the class I-like SAM-binding methyltransferase superfamily. MenG/UbiE family.

It catalyses the reaction a 2-demethylmenaquinol + S-adenosyl-L-methionine = a menaquinol + S-adenosyl-L-homocysteine + H(+). The protein operates within quinol/quinone metabolism; menaquinone biosynthesis; menaquinol from 1,4-dihydroxy-2-naphthoate: step 2/2. Methyltransferase required for the conversion of demethylmenaquinol (DMKH2) to menaquinol (MKH2). This Geobacillus stearothermophilus (Bacillus stearothermophilus) protein is Demethylmenaquinone methyltransferase.